Consider the following 400-residue polypeptide: Forkhead box protein A4-B (400 aa).

A DNA-binding region (fork-head) is located at residues 119–213 (KPPYSYISLI…ENGCYLRRQK (95 aa)). Residues 218–234 (ERSKSGEGERKGNKPGD) show a composition bias toward basic and acidic residues. Residues 218–290 (ERSKSGEGER…VGFSPTSEQA (73 aa)) form a disordered region. 2 stretches are compositionally biased toward polar residues: residues 249–258 (DCSSSRSPQA) and 267–277 (STGSSIHQATG).

In terms of tissue distribution, primarily expressed in the dorsal blastopore lip (Spemann organizer) of early gastrulae. At later stages, expressed in the dorsal mesoderm and the neural floor plate. In the dorsal mesoderm, expressed in the notochord but not in the presomitic mesoderm. Also expressed in the mid-brain area.

The protein resides in the nucleus. Functionally, transcriptional repressor involved in embryonic nervous system development. Plays a role in the induction and patterning of the anterior-posterior neural axis. Involved in the establishment of floor plate differentiation from neural plate cells during gastrulation. Binds the anf1 promoter sequence to restrict expression of anf1 to the anterior of the neural plate, thereby patterning the forebrain. Can bind to the HNF-3-alpha DNA target sequence. Cooperates with t/bra in a dose-dependent manner to specify dorsal mesoderm formation, including notochord. May be involved in the dorso-ventral patterning of the mesoderm. Binds to DNA via the target sequence 5'-[GA]TAAA[TC]A-3', with 5'-GTAAATA-3' being the preferred binding site. This is Forkhead box protein A4-B (foxa4-b) from Xenopus laevis (African clawed frog).